Reading from the N-terminus, the 361-residue chain is Outer membrane protein P2 (361 aa).

A signal peptide spans 1–20; sequence MKKTLAALIVGAFAASAANA.

It belongs to the Gram-negative porin family. In terms of assembly, homotrimer.

Its subcellular location is the cell outer membrane. Forms pores that allow passive diffusion of small molecules across the outer membrane. This chain is Outer membrane protein P2 (ompP2), found in Haemophilus influenzae.